The following is a 288-amino-acid chain: ATP phosphoribosyltransferase (288 aa).

The protein belongs to the ATP phosphoribosyltransferase family. Long subfamily. The cofactor is Mg(2+).

Its subcellular location is the cytoplasm. It catalyses the reaction 1-(5-phospho-beta-D-ribosyl)-ATP + diphosphate = 5-phospho-alpha-D-ribose 1-diphosphate + ATP. Its pathway is amino-acid biosynthesis; L-histidine biosynthesis; L-histidine from 5-phospho-alpha-D-ribose 1-diphosphate: step 1/9. Its activity is regulated as follows. Feedback inhibited by histidine. Catalyzes the condensation of ATP and 5-phosphoribose 1-diphosphate to form N'-(5'-phosphoribosyl)-ATP (PR-ATP). Has a crucial role in the pathway because the rate of histidine biosynthesis seems to be controlled primarily by regulation of HisG enzymatic activity. This Methanocaldococcus jannaschii (strain ATCC 43067 / DSM 2661 / JAL-1 / JCM 10045 / NBRC 100440) (Methanococcus jannaschii) protein is ATP phosphoribosyltransferase (hisG).